A 156-amino-acid chain; its full sequence is Calcium-binding protein A (156 aa).

EF-hand domains are found at residues alanine 4 to lysine 39, aspartate 40 to lysine 75, alanine 80 to aspartate 115, and alanine 118 to leucine 153. Residues aspartate 17, asparagine 19, aspartate 21, asparagine 23, glutamate 28, aspartate 53, aspartate 55, aspartate 57, glutamate 64, aspartate 93, aspartate 95, aspartate 97, arginine 99, glutamate 104, aspartate 131, aspartate 133, aspartate 135, and glutamate 142 each contribute to the Ca(2+) site.

This Dictyostelium discoideum (Social amoeba) protein is Calcium-binding protein A (cbpA).